Here is a 449-residue protein sequence, read N- to C-terminus: Tubulin alpha-8 chain (449 aa).

An MREC motif motif is present at residues 1 to 4 (MREC). Residues Gln-11, Glu-71, Ser-140, Gly-144, Thr-145, Thr-179, Asn-206, and Asn-228 each coordinate GTP. Mg(2+) is bound at residue Glu-71. Glu-254 is a catalytic residue.

The protein belongs to the tubulin family. In terms of assembly, dimer of alpha and beta chains. A typical microtubule is a hollow water-filled tube with an outer diameter of 25 nm and an inner diameter of 15 nM. Alpha-beta heterodimers associate head-to-tail to form protofilaments running lengthwise along the microtubule wall with the beta-tubulin subunit facing the microtubule plus end conferring a structural polarity. Microtubules usually have 13 protofilaments but different protofilament numbers can be found in some organisms and specialized cells. Mg(2+) serves as cofactor. Post-translationally, some glutamate residues at the C-terminus are polyglycylated, resulting in polyglycine chains on the gamma-carboxyl group. Glycylation is mainly limited to tubulin incorporated into axonemes (cilia and flagella) whereas glutamylation is prevalent in neuronal cells, centrioles, axonemes, and the mitotic spindle. Both modifications can coexist on the same protein on adjacent residues, and lowering polyglycylation levels increases polyglutamylation, and reciprocally. Cilia and flagella glycylation is required for their stability and maintenance. Flagella glycylation controls sperm motility. Some glutamate residues at the C-terminus are polyglutamylated, resulting in polyglutamate chains on the gamma-carboxyl group. Polyglutamylation plays a key role in microtubule severing by spastin (SPAST). SPAST preferentially recognizes and acts on microtubules decorated with short polyglutamate tails: severing activity by SPAST increases as the number of glutamates per tubulin rises from one to eight, but decreases beyond this glutamylation threshold. Glutamylation is also involved in cilia motility. In terms of processing, the C-terminal phenylalanine residue is cleaved by MATCAP1/KIAA0895L.

Its subcellular location is the cytoplasm. The protein resides in the cytoskeleton. The enzyme catalyses GTP + H2O = GDP + phosphate + H(+). Its function is as follows. Tubulin is the major constituent of microtubules, a cylinder consisting of laterally associated linear protofilaments composed of alpha- and beta-tubulin heterodimers. Microtubules grow by the addition of GTP-tubulin dimers to the microtubule end, where a stabilizing cap forms. Below the cap, tubulin dimers are in GDP-bound state, owing to GTPase activity of alpha-tubulin. The polypeptide is Tubulin alpha-8 chain (TUBA8) (Bos taurus (Bovine)).